Consider the following 384-residue polypeptide: ATP synthase subunit a (384 aa).

The interval 22–60 is disordered; that stretch reads PAPAAAPVEQHGAPAPEAAAPDAHAAPAGEHGAAVEAHA. The next 6 helical transmembrane spans lie at 131 to 151, 189 to 209, 218 to 238, 258 to 278, 293 to 313, and 319 to 339; these read KHVM…LAAV, FVPY…FGLI, NLSV…YAAI, LAPL…TKPF, FVIL…VAFG, and LGIF…FTML. The segment at 355 to 384 is disordered; that stretch reads HGHAEEHGHAGPGMGSEHGSHVAGASPGHG.

Belongs to the ATPase A chain family. F-type ATPases have 2 components, CF(1) - the catalytic core - and CF(0) - the membrane proton channel. CF(1) has five subunits: alpha(3), beta(3), gamma(1), delta(1), epsilon(1). CF(0) has three main subunits: a(1), b(2) and c(9-12). The alpha and beta chains form an alternating ring which encloses part of the gamma chain. CF(1) is attached to CF(0) by a central stalk formed by the gamma and epsilon chains, while a peripheral stalk is formed by the delta and b chains.

It localises to the cell inner membrane. In terms of biological role, key component of the proton channel; it plays a direct role in the translocation of protons across the membrane. This Anaeromyxobacter dehalogenans (strain 2CP-1 / ATCC BAA-258) protein is ATP synthase subunit a.